Reading from the N-terminus, the 197-residue chain is Beta-crystallin A2 (197 aa).

An N-terminal arm region spans residues 1-11 (MSSASAPGPAP). 2 consecutive Beta/gamma crystallin 'Greek key' domains span residues 12-52 (ACLT…KVEN) and 53-99 (GAWV…RPVL). Residues 100 to 105 (CANHSD) are connecting peptide. Beta/gamma crystallin 'Greek key' domains lie at 106-147 (SRVT…KVSS) and 148-196 (GAWV…RRVQ).

This sequence belongs to the beta/gamma-crystallin family. Homo/heterodimer, or complexes of higher-order. The structure of beta-crystallin oligomers seems to be stabilized through interactions between the N-terminal arms.

Crystallins are the dominant structural components of the vertebrate eye lens. The protein is Beta-crystallin A2 (CRYBA2) of Oryctolagus cuniculus (Rabbit).